Consider the following 88-residue polypeptide: UPF0297 protein SSU98_0066 (88 aa).

The protein belongs to the UPF0297 family.

In Streptococcus suis (strain 98HAH33), this protein is UPF0297 protein SSU98_0066.